The primary structure comprises 321 residues: D-alanine--D-alanine ligase (321 aa).

The 195-residue stretch at 121–315 (RSWFLTNNIN…FVNLIEEILK (195 aa)) folds into the ATP-grasp domain. ATP is bound at residue 148-199 (IKRPYVIKPFTQGSSIGVEVIFEEDDFNFANYDFPYGDEVIIEKYIKGRELQ). Mg(2+) is bound by residues E268, E282, and N284.

This sequence belongs to the D-alanine--D-alanine ligase family. The cofactor is Mg(2+). It depends on Mn(2+) as a cofactor.

It is found in the cytoplasm. The catalysed reaction is 2 D-alanine + ATP = D-alanyl-D-alanine + ADP + phosphate + H(+). It participates in cell wall biogenesis; peptidoglycan biosynthesis. In terms of biological role, cell wall formation. The protein is D-alanine--D-alanine ligase of Rickettsia bellii (strain OSU 85-389).